The following is a 156-amino-acid chain: Small ribosomal subunit protein uS7 (156 aa).

Belongs to the universal ribosomal protein uS7 family. As to quaternary structure, part of the 30S ribosomal subunit. Contacts proteins S9 and S11.

Functionally, one of the primary rRNA binding proteins, it binds directly to 16S rRNA where it nucleates assembly of the head domain of the 30S subunit. Is located at the subunit interface close to the decoding center, probably blocks exit of the E-site tRNA. The protein is Small ribosomal subunit protein uS7 of Pectobacterium carotovorum subsp. carotovorum (strain PC1).